Consider the following 210-residue polypeptide: DNA-directed RNA polymerases I, II, and III subunit RPABC1 (210 aa).

Residue methionine 1 is modified to N-acetylmethionine. Lysine 81 participates in a covalent cross-link: Glycyl lysine isopeptide (Lys-Gly) (interchain with G-Cter in SUMO2).

It belongs to the archaeal Rpo5/eukaryotic RPB5 RNA polymerase subunit family. Component of the RNA polymerase I (Pol I), RNA polymerase II (Pol II) and RNA polymerase III (Pol III) complexes consisting of at least 13, 12 and 17 subunits, respectively. Pol I complex consists of a ten-subunit catalytic core composed of POLR1A/RPA1, POLR1B/RPA2, POLR1C/RPAC1, POLR1D/RPAC2, POLR1H/RPA12, POLR2E/RPABC1, POLR2F/RPABC2, POLR2H/RPABC3, POLR2K/RPABC4 and POLR2L/RPABC5; a mobile stalk subunit POLR1F/RPA43 protruding from the core and additional subunits homologous to general transcription factors POLR1E/RPA49 and POLR1G/RPA34. Part of Pol I pre-initiation complex (PIC), in which Pol I core assembles with RRN3 and promoter-bound UTBF and SL1/TIF-IB complex. Pol II complex contains a ten-subunit catalytic core composed of POLR2A/RPB1, POLR2B/RPB2, POLR2C/RPB3, POLR2I/RPB9, POLR2J/RPB11, POLR2E/RPABC1, POLR2F/RPABC2, POLR2H/RPABC3, POLR2K/RPABC4 and POLR2L/RPABC5 and a mobile stalk composed of two subunits POLR2D/RPB4 and POLR2G/RPB7. Part of Pol II(G) complex, in which Pol II core associates with an additional subunit POLR2M; unlike conventional Pol II, Pol II(G) functions as a transcriptional repressor. Part of TBP-based Pol II pre-initiation complex (PIC), in which Pol II core assembles with general transcription factors and other specific initiation factors including GTF2E1, GTF2E2, GTF2F1, GTF2F2, TCEA1, ERCC2, ERCC3, GTF2H2, GTF2H3, GTF2H4, GTF2H5, GTF2A1, GTF2A2, GTF2B and TBP; this large multi-subunit PIC complex mediates DNA unwinding and targets Pol II core to the transcription start site where the first phosphodiester bond forms. In Pol II complex, this subunit is present in 2-fold molar excess over the other subunits. Pol III complex consists of a ten-subunit catalytic core composed of POLR3A/RPC1, POLR3B/RPC2, POLR1C/RPAC1, POLR1D/RPAC2, POLR3K/RPC10, POLR2E/RPABC1, POLR2F/RPABC2, POLR2H/RPABC3, POLR2K/RPABC4 and POLR2L/RPABC5; a mobile stalk composed of two subunits POLR3H/RPC8 and CRCP/RPC9, protruding from the core and functioning primarily in transcription initiation; and additional subunits homologous to general transcription factors of the RNA polymerase II machinery, POLR3C/RPC3-POLR3F/RPC6-POLR3G/RPC7 heterotrimer required for transcription initiation and POLR3D/RPC4-POLR3E/RPC5 heterodimer involved in both transcription initiation and termination. Component of the PAQosome complex which is responsible for the biogenesis of several protein complexes and which consists of R2TP complex members RUVBL1, RUVBL2, RPAP3 and PIH1D1, URI complex members PFDN2, PFDN6, PDRG1, UXT and URI1 as well as ASDURF, POLR2E and DNAAF10/WDR92. Interacts with URI1. In terms of assembly, (Microbial infection) Interacts with HBV protein X.

It localises to the nucleus. The protein resides in the nucleolus. In terms of biological role, DNA-dependent RNA polymerase catalyzes the transcription of DNA into RNA using the four ribonucleoside triphosphates as substrates. Common component of RNA polymerases I, II and III which synthesize ribosomal RNA precursors, mRNA precursors and many functional non-coding RNAs, and small RNAs, such as 5S rRNA and tRNAs, respectively. Pol II is the central component of the basal RNA polymerase II transcription machinery. Pols are composed of mobile elements that move relative to each other. In Pol II, POLR2E/RPABC1 is part of the lower jaw surrounding the central large cleft and thought to grab the incoming DNA template. In Homo sapiens (Human), this protein is DNA-directed RNA polymerases I, II, and III subunit RPABC1.